The primary structure comprises 63 residues: Large ribosomal subunit protein bL28 (63 aa).

It belongs to the bacterial ribosomal protein bL28 family.

This is Large ribosomal subunit protein bL28 from Clostridium beijerinckii (strain ATCC 51743 / NCIMB 8052) (Clostridium acetobutylicum).